A 243-amino-acid polypeptide reads, in one-letter code: Pyridoxine 5'-phosphate synthase (243 aa).

Asparagine 9 provides a ligand contact to 3-amino-2-oxopropyl phosphate. Residue 11 to 12 (DH) participates in 1-deoxy-D-xylulose 5-phosphate binding. 3-amino-2-oxopropyl phosphate is bound at residue arginine 20. Histidine 45 acts as the Proton acceptor in catalysis. 1-deoxy-D-xylulose 5-phosphate contacts are provided by arginine 47 and histidine 52. The Proton acceptor role is filled by glutamate 72. Threonine 102 provides a ligand contact to 1-deoxy-D-xylulose 5-phosphate. The Proton donor role is filled by histidine 193. 3-amino-2-oxopropyl phosphate contacts are provided by residues glycine 194 and 215-216 (GH).

This sequence belongs to the PNP synthase family. Homooctamer; tetramer of dimers.

It is found in the cytoplasm. The catalysed reaction is 3-amino-2-oxopropyl phosphate + 1-deoxy-D-xylulose 5-phosphate = pyridoxine 5'-phosphate + phosphate + 2 H2O + H(+). The protein operates within cofactor biosynthesis; pyridoxine 5'-phosphate biosynthesis; pyridoxine 5'-phosphate from D-erythrose 4-phosphate: step 5/5. In terms of biological role, catalyzes the complicated ring closure reaction between the two acyclic compounds 1-deoxy-D-xylulose-5-phosphate (DXP) and 3-amino-2-oxopropyl phosphate (1-amino-acetone-3-phosphate or AAP) to form pyridoxine 5'-phosphate (PNP) and inorganic phosphate. The polypeptide is Pyridoxine 5'-phosphate synthase (Shigella sonnei (strain Ss046)).